A 629-amino-acid chain; its full sequence is tRNA uridine 5-carboxymethylaminomethyl modification enzyme MnmG (629 aa).

13-18 (GGGHAG) is an FAD binding site. 273–287 (GPRYCPSIEDKIMRF) contributes to the NAD(+) binding site.

Belongs to the MnmG family. In terms of assembly, homodimer. Heterotetramer of two MnmE and two MnmG subunits. Requires FAD as cofactor.

The protein resides in the cytoplasm. Functionally, NAD-binding protein involved in the addition of a carboxymethylaminomethyl (cmnm) group at the wobble position (U34) of certain tRNAs, forming tRNA-cmnm(5)s(2)U34. In Tolumonas auensis (strain DSM 9187 / NBRC 110442 / TA 4), this protein is tRNA uridine 5-carboxymethylaminomethyl modification enzyme MnmG.